The chain runs to 406 residues: Angiopoietin-related protein 4 (406 aa).

The N-terminal stretch at 1–25 (MSGAPTAGAALMLCAATAVLLSAQG) is a signal peptide. Residues 100-143 (EVLHSLQTQLKAQNSRIQQLFHKVAQQQRHLEKQHLRIQHLQSQ) are a coiled coil. N177 is a glycosylation site (N-linked (GlcNAc...) asparagine). The Fibrinogen C-terminal domain maps to 179–401 (SRLHRLPRDC…ATTMLIQPMA (223 aa)). 2 cysteine pairs are disulfide-bonded: C188–C216 and C341–C354.

Homooligomer; disulfide-linked via Cys residues in the N-terminal part of the protein. The homooligomer undergoes proteolytic processing to release the ANGPTL4 C-terminal chain, which circulates as a monomer. The homooligomer unprocessed form is able to interact with the extracellular matrix. Post-translationally, N-glycosylated. Forms disulfide-linked dimers and tetramers. In terms of processing, cleaved into a smaller N-terminal chain and a larger chain that contains the fibrinogen C-terminal domain; both cleaved and uncleaved forms are detected in the extracellular space. The cleaved form is not present within the cell. In terms of tissue distribution, detected in blood plasma (at protein level). Detected in liver. Detected in white fat tissue and placenta. Expressed at high levels in the placenta, heart, liver, muscle, pancreas and lung but expressed poorly in the brain and kidney.

It localises to the secreted. Its subcellular location is the extracellular space. The protein resides in the extracellular matrix. Its function is as follows. Mediates inactivation of the lipoprotein lipase LPL, and thereby plays a role in the regulation of triglyceride clearance from the blood serum and in lipid metabolism. May also play a role in regulating glucose homeostasis and insulin sensitivity. Inhibits proliferation, migration, and tubule formation of endothelial cells and reduces vascular leakage. Upon heterologous expression, inhibits the adhesion of endothelial cell to the extracellular matrix (ECM), and inhibits the reorganization of the actin cytoskeleton, formation of actin stress fibers and focal adhesions in endothelial cells that have adhered to ANGPTL4-containing ECM (in vitro). Depending on context, may modulate tumor-related angiogenesis. In terms of biological role, mediates inactivation of the lipoprotein lipase LPL, and thereby plays an important role in the regulation of triglyceride clearance from the blood serum and in lipid metabolism. Has higher activity in LPL inactivation than the uncleaved protein. The protein is Angiopoietin-related protein 4 (ANGPTL4) of Homo sapiens (Human).